The chain runs to 428 residues: Glutamyl-tRNA reductase (428 aa).

Substrate is bound by residues 49–52 (TCNR), Ser-109, 114–116 (EGQ), and Gln-120. Cys-50 (nucleophile) is an active-site residue. 189–194 (GAGKMS) is an NADP(+) binding site.

This sequence belongs to the glutamyl-tRNA reductase family. In terms of assembly, homodimer.

It carries out the reaction (S)-4-amino-5-oxopentanoate + tRNA(Glu) + NADP(+) = L-glutamyl-tRNA(Glu) + NADPH + H(+). It functions in the pathway porphyrin-containing compound metabolism; protoporphyrin-IX biosynthesis; 5-aminolevulinate from L-glutamyl-tRNA(Glu): step 1/2. It participates in porphyrin-containing compound metabolism; chlorophyll biosynthesis. Functionally, catalyzes the NADPH-dependent reduction of glutamyl-tRNA(Glu) to glutamate 1-semialdehyde (GSA). This Trichormus variabilis (strain ATCC 29413 / PCC 7937) (Anabaena variabilis) protein is Glutamyl-tRNA reductase.